A 993-amino-acid chain; its full sequence is Structural polyprotein (993 aa).

Aspartate 11 serves as a coordination point for a divalent metal cation. The Peptidase S50 domain occupies 494–736 (ADKGYEVVAN…AGRQYHLAMA (243 aa)). The Nucleophile role is filled by serine 633. Lysine 673 is a catalytic residue. The disordered stretch occupies residues 950–993 (AMEMKHRNPRRALPKPKPKPNAPTQRPPGRLGRWIRTVSDEDLE). Residues 956–967 (RNPRRALPKPKP) are compositionally biased toward basic residues. The segment at 984–993 (IRTVSDEDLE) is interaction with VP1 protein.

Homotrimer. A central divalent metal stabilizes the VP2 trimer. Interacts with host ITGA4/ITGB1. In terms of assembly, homodimer. Interacts (via C-terminus) with VP1 in the cytoplasm. Interacts with VP2. In terms of processing, specific enzymatic cleavages yield mature proteins. The capsid assembly seems to be regulated by polyprotein processing. The protease VP4 cleaves itself off the polyprotein, thus releasing pre-VP2 and VP3 within the infected cell. During capsid assembly, the C-terminus of pre-VP2 is further processed by VP4, giving rise to VP2, the external capsid protein and three small peptides that all stay closely associated with the capsid.

The protein resides in the virion. The protein localises to the host cytoplasm. Functionally, capsid protein VP2 self assembles to form an icosahedral capsid with a T=13 symmetry, about 70 nm in diameter, and consisting of 260 VP2 trimers. The capsid encapsulates the genomic dsRNA. VP2 is also involved in attachment and entry into the host cell by interacting with host ITGA4/ITGB1. In terms of biological role, the precursor of VP2 plays an important role in capsid assembly. First, pre-VP2 and VP2 oligomers assemble to form a procapsid. Then, the pre-VP2 intermediates may be processed into VP2 proteins by proteolytic cleavage mediated by VP4 to obtain the mature virion. The final capsid is composed of pentamers and hexamers but VP2 has a natural tendency to assemble into all-pentameric structures. Therefore pre-VP2 may be required to allow formation of the hexameric structures. Protease VP4 is a serine protease that cleaves the polyprotein into its final products. Pre-VP2 is first partially cleaved, and may be completely processed by VP4 upon capsid maturation. Its function is as follows. Capsid protein VP3 plays a key role in virion assembly by providing a scaffold for the capsid made of VP2. May self-assemble to form a T=4-like icosahedral inner-capsid composed of at least 180 trimers. Plays a role in genomic RNA packaging by recruiting VP1 into the capsid and interacting with the dsRNA genome segments to form a ribonucleoprotein complex. Additionally, the interaction of the VP3 C-terminal tail with VP1 removes the inherent structural blockade of the polymerase active site. Thus, VP3 can also function as a transcriptional activator. Functionally, structural peptide 1 is a small peptide derived from pre-VP2 C-terminus. It destabilizes and perforates cell membranes, suggesting a role during entry. In terms of biological role, structural peptide 2 is a small peptide derived from pVP2 C-terminus. It is not essential for the virus viability, but viral growth is affected when missing. Structural peptide 3 is a small peptide derived from pVP2 C-terminus. It is not essential for the virus viability, but viral growth is affected when missing. Its function is as follows. Structural peptide 4 is a small peptide derived from pVP2 C-terminus. It is essential for the virus viability. The protein is Structural polyprotein of Avian infectious bursal disease virus (strain PBG-98) (IBDV).